The sequence spans 107 residues: Phosphoribosyl-ATP pyrophosphatase (107 aa).

This sequence belongs to the PRA-PH family.

It is found in the cytoplasm. It carries out the reaction 1-(5-phospho-beta-D-ribosyl)-ATP + H2O = 1-(5-phospho-beta-D-ribosyl)-5'-AMP + diphosphate + H(+). It participates in amino-acid biosynthesis; L-histidine biosynthesis; L-histidine from 5-phospho-alpha-D-ribose 1-diphosphate: step 2/9. The chain is Phosphoribosyl-ATP pyrophosphatase from Caulobacter sp. (strain K31).